Reading from the N-terminus, the 566-residue chain is E3 ubiquitin-protein ligase RNF220 (566 aa).

K277 participates in a covalent cross-link: Glycyl lysine isopeptide (Lys-Gly) (interchain with G-Cter in SUMO2). Residues 277 to 297 (KREGESPTASPHSSATDDLHH) are disordered. At S390 the chain carries Phosphoserine. Positions 485–513 (EDSAVTTFEALKARVRELERQLSRGDRYK) form a coiled coil. The required for targeting to the cytoplasm stretch occupies residues 514–522 (CLICMDSYS). An RING-type zinc finger spans residues 514–553 (CLICMDSYSMPLTSIQCWHVHCEECWLRTLGAKKLCPQCN).

Interacts with SIN3B. Interacts with CTNNB1 (via Armadillo repeats 2-8). Interacts with USP7 (via MATH domain). Post-translationally, auto-ubiquitinated; leads to proteasomal degradation.

Its subcellular location is the cytoplasm. It localises to the nucleus. The catalysed reaction is S-ubiquitinyl-[E2 ubiquitin-conjugating enzyme]-L-cysteine + [acceptor protein]-L-lysine = [E2 ubiquitin-conjugating enzyme]-L-cysteine + N(6)-ubiquitinyl-[acceptor protein]-L-lysine.. It participates in protein modification; protein ubiquitination. In terms of biological role, E3 ubiquitin-protein ligase that promotes the ubiquitination and proteasomal degradation of SIN3B. Independently of its E3 ligase activity, acts as a CTNNB1 stabilizer through USP7-mediated deubiquitination of CTNNB1 and promotes Wnt signaling. Plays a critical role in the regulation of nuclear lamina. The protein is E3 ubiquitin-protein ligase RNF220 (RNF220) of Macaca fascicularis (Crab-eating macaque).